The sequence spans 380 residues: Flap endonuclease 1 (380 aa).

The tract at residues 1-104 is N-domain; that stretch reads MGIQGLAKLI…GELAKRSERR (104 aa). Arg-19 is modified (symmetric dimethylarginine; by PRMT5). Asp-34 contributes to the Mg(2+) binding site. Positions 47 and 70 each coordinate DNA. Lys-80 carries the N6-acetyllysine modification. Position 86 (Asp-86) interacts with Mg(2+). Symmetric dimethylarginine; by PRMT5 occurs at positions 100 and 104. The I-domain stretch occupies residues 122–253; that stretch reads EVEKFTKRLV…KRAVDLIQKH (132 aa). Positions 158, 160, 179, and 181 each coordinate Mg(2+). Residue Glu-158 coordinates DNA. Ser-187 carries the phosphoserine; by CDK2 modification. Arg-192 is subject to Symmetric dimethylarginine; by PRMT5. Position 197 is a phosphoserine (Ser-197). DNA contacts are provided by Gly-231 and Asp-233. A Mg(2+)-binding site is contributed by Asp-233. 3 positions are modified to phosphoserine: Ser-255, Ser-293, and Ser-335. A Phosphothreonine modification is found at Thr-336. Residues 336 to 344 form an interaction with PCNA region; it reads TQGRLDDFF. Residues 349-380 are disordered; that stretch reads SLSSAKRKEPEPKGAAKKKQRLGPAGKFKRGK. N6-acetyllysine is present on residues Lys-354, Lys-375, Lys-377, and Lys-380. Over residues 363-380 the composition is skewed to basic residues; sequence AAKKKQRLGPAGKFKRGK.

It belongs to the XPG/RAD2 endonuclease family. FEN1 subfamily. As to quaternary structure, interacts with PCNA. Three molecules of FEN1 bind to one PCNA trimer with each molecule binding to one PCNA monomer. PCNA stimulates the nuclease activity without altering cleavage specificity. The C-terminal domain binds EP300; can bind simultaneously to both PCNA and EP300. Interacts with DDX11; this interaction is direct and increases flap endonuclease activity of FEN1. Interacts with WDR4; regulating its endonuclease activity. Interacts with POLB. Mg(2+) serves as cofactor. Acetylated by EP300. Acetylation inhibits both endonuclease and exonuclease activity. Acetylation also reduces DNA-binding activity but does not affect interaction with PCNA or EP300. Post-translationally, phosphorylation upon DNA damage induces relocalization to the nuclear plasma. Phosphorylation at Ser-187 by CDK2 occurs during late S-phase and results in dissociation from PCNA. In terms of processing, methylation at Arg-192 by PRMT5 impedes Ser-187 phosphorylation and increases interaction with PCNA.

The protein localises to the nucleus. The protein resides in the nucleolus. It is found in the nucleoplasm. It localises to the mitochondrion. Its function is as follows. Structure-specific nuclease with 5'-flap endonuclease and 5'-3' exonuclease activities involved in DNA replication and repair. During DNA replication, cleaves the 5'-overhanging flap structure that is generated by displacement synthesis when DNA polymerase encounters the 5'-end of a downstream Okazaki fragment. It enters the flap from the 5'-end and then tracks to cleave the flap base, leaving a nick for ligation. Also involved in the long patch base excision repair (LP-BER) pathway, by cleaving within the apurinic/apyrimidinic (AP) site-terminated flap. Acts as a genome stabilization factor that prevents flaps from equilibrating into structures that lead to duplications and deletions. Also possesses 5'-3' exonuclease activity on nicked or gapped double-stranded DNA, and exhibits RNase H activity. Also involved in replication and repair of rDNA and in repairing mitochondrial DNA. The polypeptide is Flap endonuclease 1 (Ovis aries (Sheep)).